The primary structure comprises 146 residues: Large ribosomal subunit protein uL16c (146 aa).

It belongs to the universal ribosomal protein uL16 family. Part of the 50S ribosomal subunit.

The protein localises to the plastid. It is found in the chloroplast. This Angiopteris evecta (Mule's foot fern) protein is Large ribosomal subunit protein uL16c.